The sequence spans 234 residues: MIKLWPAIDLINATSVRLTEGKYDSEVKMARSAEESVLFYNQYQCVDRIHIVDLIGAKNQVSIESDYINQLRSLTDKPMEVGGGIRDRNTIDTYFNNGIDYCIIGTKGIEDLAWLSHMTQAFPNRLYLSIDAYRRQVKINGWEEDAGLDIFDLLQQVESLPLGGIIYTDISKDGKLEGPNFEITQQLVQATQKPIIASGGIRHQQDLAQLESIGVHAAIVGKAAHNATFWEGLS.

Asp-9 serves as the catalytic Proton acceptor. Asp-131 acts as the Proton donor in catalysis.

This sequence belongs to the HisA/HisF family.

It localises to the cytoplasm. It carries out the reaction 1-(5-phospho-beta-D-ribosyl)-5-[(5-phospho-beta-D-ribosylamino)methylideneamino]imidazole-4-carboxamide = 5-[(5-phospho-1-deoxy-D-ribulos-1-ylimino)methylamino]-1-(5-phospho-beta-D-ribosyl)imidazole-4-carboxamide. It participates in amino-acid biosynthesis; L-histidine biosynthesis; L-histidine from 5-phospho-alpha-D-ribose 1-diphosphate: step 4/9. In Staphylococcus saprophyticus subsp. saprophyticus (strain ATCC 15305 / DSM 20229 / NCIMB 8711 / NCTC 7292 / S-41), this protein is 1-(5-phosphoribosyl)-5-[(5-phosphoribosylamino)methylideneamino] imidazole-4-carboxamide isomerase.